Reading from the N-terminus, the 402-residue chain is Queuine tRNA-ribosyltransferase-like protein (402 aa).

This sequence belongs to the queuine tRNA-ribosyltransferase family.

In Theileria parva (East coast fever infection agent), this protein is Queuine tRNA-ribosyltransferase-like protein.